The chain runs to 816 residues: Leucine--tRNA ligase (816 aa).

Residues 42–52 carry the 'HIGH' region motif; the sequence is PYPSGSLHMGH. The short motif at 574–578 is the 'KMSKS' region element; the sequence is KMSKS. Lysine 577 contributes to the ATP binding site.

It belongs to the class-I aminoacyl-tRNA synthetase family.

The protein localises to the cytoplasm. The enzyme catalyses tRNA(Leu) + L-leucine + ATP = L-leucyl-tRNA(Leu) + AMP + diphosphate. The sequence is that of Leucine--tRNA ligase from Ruthia magnifica subsp. Calyptogena magnifica.